Reading from the N-terminus, the 89-residue chain is Cell division topological specificity factor (89 aa).

Belongs to the MinE family.

Its function is as follows. Prevents the cell division inhibition by proteins MinC and MinD at internal division sites while permitting inhibition at polar sites. This ensures cell division at the proper site by restricting the formation of a division septum at the midpoint of the long axis of the cell. This Serratia proteamaculans (strain 568) protein is Cell division topological specificity factor.